We begin with the raw amino-acid sequence, 303 residues long: Ribosomal large subunit pseudouridine synthase C (303 aa).

The S4 RNA-binding domain maps to 11–87 (FRLDKYLKRL…AEIKLAKKIL (77 aa)). Residue D140 is part of the active site.

This sequence belongs to the pseudouridine synthase RluA family.

It carries out the reaction uridine(955/2504/2580) in 23S rRNA = pseudouridine(955/2504/2580) in 23S rRNA. Responsible for synthesis of pseudouridine from uracil at positions 955, 2504 and 2580 in 23S ribosomal RNA. This chain is Ribosomal large subunit pseudouridine synthase C (rluC), found in Rickettsia prowazekii (strain Madrid E).